The sequence spans 535 residues: Dimethylaniline monooxygenase [N-oxide-forming] 2 (535 aa).

N-acetylalanine is present on alanine 2. Residues glycine 9–serine 13, glutamate 32, leucine 40–tryptophan 41, and asparagine 61–threonine 62 each bind FAD. Residues threonine 60 to asparagine 61 and serine 195 to aspartate 198 contribute to the NADP(+) site. Residue lysine 492 forms a Glycyl lysine isopeptide (Lys-Gly) (interchain with G-Cter in SUMO) linkage. Residues phenylalanine 510–phenylalanine 530 form a helical membrane-spanning segment.

This sequence belongs to the FMO family. It depends on FAD as a cofactor. Mg(2+) serves as cofactor. As to expression, lung.

Its subcellular location is the microsome membrane. The protein resides in the endoplasmic reticulum membrane. The catalysed reaction is N,N-dimethylaniline + NADPH + O2 + H(+) = N,N-dimethylaniline N-oxide + NADP(+) + H2O. Its function is as follows. Catalyzes the oxidative metabolism of numerous xenobiotics, including mainly therapeutic drugs and insecticides that contain a soft nucleophile, most commonly nitrogen and sulfur and participates to their bioactivation. Most drug substrates are tertiary amines such as prochlorperazine and trifluoperazine which are N-oxygenated to form the N-oxide, or sulfides such as thiourea and ethionamide, which are S-oxygenated to the sulfoxide. Others include primary alkylamines such as N-dodecylamine and octan-1-amine that are sequentially monooxygenated to oximes through intermediate hydroxylamines and both steps are NADPH- and oxygen-dependent. Also metabolized N-Deacetyl ketoconazole (DAK) to N-hydroxy-DAK and appears to further metabolizes N-hydroxy-DAK to two others metabolites. Also catalyzes S-oxygenation of the thioether-containing organophosphate insecticides, phorate and disulfoton. The chain is Dimethylaniline monooxygenase [N-oxide-forming] 2 from Oryctolagus cuniculus (Rabbit).